A 319-amino-acid polypeptide reads, in one-letter code: tRNA (guanine-N(7)-)-methyltransferase (319 aa).

3 residues coordinate S-adenosyl-L-methionine: E28, E51, and D75. Substrate-binding positions include D134 and 167-170 (TKYE).

It belongs to the class I-like SAM-binding methyltransferase superfamily. TrmB family.

It catalyses the reaction guanosine(46) in tRNA + S-adenosyl-L-methionine = N(7)-methylguanosine(46) in tRNA + S-adenosyl-L-homocysteine. The protein operates within tRNA modification; N(7)-methylguanine-tRNA biosynthesis. Functionally, catalyzes the formation of N(7)-methylguanine at position 46 (m7G46) in tRNA. The polypeptide is tRNA (guanine-N(7)-)-methyltransferase (Coprothermobacter proteolyticus (strain ATCC 35245 / DSM 5265 / OCM 4 / BT)).